We begin with the raw amino-acid sequence, 226 residues long: Ras-related protein Rab11A (226 aa).

GTP is bound by residues 24–32, 43–49, 72–76, 130–133, and 160–162; these read GDSAVGKSQ, SLDSKST, DTAGQ, NKCD, and SAL. An Effector region motif is present at residues 46-54; it reads SKSTIGVEF. S-geranylgeranyl cysteine attachment occurs at residues C222 and C223. The residue at position 223 (C223) is a Cysteine methyl ester. Residues 224–226 constitute a propeptide, removed in mature form; sequence QAS.

It belongs to the small GTPase superfamily. Rab family.

It localises to the cell membrane. This is Ras-related protein Rab11A (RAB11A) from Lotus japonicus (Lotus corniculatus var. japonicus).